The following is a 120-amino-acid chain: UPF0344 protein BCAH187_A1308 (120 aa).

4 consecutive transmembrane segments (helical) span residues 6 to 26 (ITAW…YSAG), 32 to 52 (VHMG…WLYL), 64 to 84 (WYGL…MVLV), and 91 to 111 (ATGA…YLGL).

The protein belongs to the UPF0344 family.

The protein resides in the cell membrane. This Bacillus cereus (strain AH187) protein is UPF0344 protein BCAH187_A1308.